Here is a 259-residue protein sequence, read N- to C-terminus: Chaplin-C (259 aa).

The signal sequence occupies residues 1 to 28 (MRQATRKGLMTMAAATGVIAAAGGAAHA). In terms of domain architecture, Chaplin 1 spans 39–79 (SPGVLSGNTVQAPVHVPVNVCGNTVDVVGVLNPAMGNACAN). The segment covering 84 to 112 (ASGGHGGHGGHGGYGDSGGEGGSHGGSHA) has biased composition (gly residues). Disordered regions lie at residues 84-129 (ASGG…NHVE) and 154-227 (GNDC…ALAE). The 41-residue stretch at 119–159 (SPGVGSGNHVEVPIDVPVNVCGNSIDVVGALNPTTGNDCGN) folds into the Chaplin 2 domain. Low complexity predominate over residues 180 to 189 (HNPGNPGNPD). Positions 225–229 (LAETG) match the LPXTG sorting signal motif. Thr228 is modified (pentaglycyl murein peptidoglycan amidated threonine). The propeptide at 229–259 (GSDLPLGLALPVGAGALLAGTVLYRKARASV) is removed by sortase.

It belongs to the chaplin family. Long chaplin subfamily.

Its subcellular location is the secreted. It is found in the cell wall. Functionally, one of 8 partially redundant surface-active proteins required for efficient formation of aerial mycelium; the short chaplins assemble into a hydrophobic, amyloidal fibrillar surface layer that envelopes and protects aerial hyphae and spores, presumably anchored to the long chaplins. Chaplins have an overlapping function with the surface-active SapB peptide; chaplins are essential on minimal medium while on rich medium both chaplins and SapB are required for efficient aerial hyphae formation. A minimal chaplin strain capable of forming aerial mycelium/hyphae on minimal medium contains ChpC, ChpE and ChpH. The strain also has restored rodlet formation on the hyphae surface. The long chaplins (ChpA, ChpB, ChpC) are not absolutely necessary for short chaplin localization or rodlet formation, but probably play a role in initiating aerial hyphae development. Chaplins are also involved in cell attachment to a hydrophobic surface. This Streptomyces coelicolor (strain ATCC BAA-471 / A3(2) / M145) protein is Chaplin-C.